A 398-amino-acid chain; its full sequence is 1-deoxy-D-xylulose 5-phosphate reductoisomerase (398 aa).

NADPH contacts are provided by T10, G11, S12, V13, G36, K37, N38, and N124. 1-deoxy-D-xylulose 5-phosphate is bound at residue K125. Residue E126 coordinates NADPH. D150 lines the Mn(2+) pocket. 1-deoxy-D-xylulose 5-phosphate-binding residues include S151, E152, S186, and H209. Residue E152 coordinates Mn(2+). G215 provides a ligand contact to NADPH. 1-deoxy-D-xylulose 5-phosphate contacts are provided by S222, N227, K228, and E231. E231 is a binding site for Mn(2+).

The protein belongs to the DXR family. In terms of assembly, homodimer. Requires Mg(2+) as cofactor. Mn(2+) is required as a cofactor.

It carries out the reaction 2-C-methyl-D-erythritol 4-phosphate + NADP(+) = 1-deoxy-D-xylulose 5-phosphate + NADPH + H(+). The protein operates within isoprenoid biosynthesis; isopentenyl diphosphate biosynthesis via DXP pathway; isopentenyl diphosphate from 1-deoxy-D-xylulose 5-phosphate: step 1/6. Catalyzes the NADPH-dependent rearrangement and reduction of 1-deoxy-D-xylulose-5-phosphate (DXP) to 2-C-methyl-D-erythritol 4-phosphate (MEP). The polypeptide is 1-deoxy-D-xylulose 5-phosphate reductoisomerase (Photorhabdus laumondii subsp. laumondii (strain DSM 15139 / CIP 105565 / TT01) (Photorhabdus luminescens subsp. laumondii)).